Consider the following 372-residue polypeptide: N-methyl-L-tryptophan oxidase (372 aa).

4–34 (DLIIIGSGSVGAAAGYYATRAGLNVLMTDAH) is a binding site for FAD. Cys308 is subject to S-8alpha-FAD cysteine.

The protein belongs to the MSOX/MTOX family. MTOX subfamily. Monomer. FAD is required as a cofactor.

It catalyses the reaction N(alpha)-methyl-L-tryptophan + O2 + H2O = L-tryptophan + formaldehyde + H2O2. Its function is as follows. Catalyzes the oxidative demethylation of N-methyl-L-tryptophan. In Escherichia coli (strain K12 / DH10B), this protein is N-methyl-L-tryptophan oxidase.